The following is a 471-amino-acid chain: Glutamate--tRNA ligase 1 (471 aa).

A 'HIGH' region motif is present at residues 10–20 (PSPTGYLHIGG). Positions 99, 101, 126, and 128 each coordinate Zn(2+). The 'KMSKS' region motif lies at 238–242 (RLSKR). Lys-241 is a binding site for ATP.

This sequence belongs to the class-I aminoacyl-tRNA synthetase family. Glutamate--tRNA ligase type 1 subfamily. Monomer. The cofactor is Zn(2+).

Its subcellular location is the cytoplasm. It carries out the reaction tRNA(Glu) + L-glutamate + ATP = L-glutamyl-tRNA(Glu) + AMP + diphosphate. In terms of biological role, catalyzes the attachment of glutamate to tRNA(Glu) in a two-step reaction: glutamate is first activated by ATP to form Glu-AMP and then transferred to the acceptor end of tRNA(Glu). The polypeptide is Glutamate--tRNA ligase 1 (Alkalilimnicola ehrlichii (strain ATCC BAA-1101 / DSM 17681 / MLHE-1)).